Reading from the N-terminus, the 129-residue chain is Small ribosomal subunit protein uS11 (129 aa).

The protein belongs to the universal ribosomal protein uS11 family. As to quaternary structure, part of the 30S ribosomal subunit. Interacts with proteins S7 and S18. Binds to IF-3.

Located on the platform of the 30S subunit, it bridges several disparate RNA helices of the 16S rRNA. Forms part of the Shine-Dalgarno cleft in the 70S ribosome. The sequence is that of Small ribosomal subunit protein uS11 from Sodalis glossinidius (strain morsitans).